The sequence spans 473 residues: Trehalose-6-phosphate synthase (473 aa).

R10 is a D-glucose 6-phosphate binding site. Residue 21 to 22 (GG) coordinates UDP-alpha-D-glucose. 2 residues coordinate D-glucose 6-phosphate: Y76 and D130. R262 and K267 together coordinate UDP-alpha-D-glucose. R300 is a D-glucose 6-phosphate binding site. Residues F339 and 365 to 369 (LVAKE) each bind UDP-alpha-D-glucose. The interval 454–473 (TPRSPERQQQNNVATFPKLA) is disordered.

This sequence belongs to the glycosyltransferase 20 family. In terms of assembly, homotetramer.

It catalyses the reaction D-glucose 6-phosphate + UDP-alpha-D-glucose = alpha,alpha-trehalose 6-phosphate + UDP + H(+). The protein operates within glycan biosynthesis; trehalose biosynthesis. Functionally, probably involved in the osmoprotection via the biosynthesis of trehalose. Catalyzes the transfer of glucose from UDP-alpha-D-glucose (UDP-Glc) to D-glucose 6-phosphate (Glc-6-P) to form trehalose-6-phosphate. Acts with retention of the anomeric configuration of the UDP-sugar donor. This is Trehalose-6-phosphate synthase from Salmonella paratyphi A (strain ATCC 9150 / SARB42).